The primary structure comprises 310 residues: Altered inheritance of mitochondria protein 46, mitochondrial (310 aa).

The transit peptide at 1–20 directs the protein to the mitochondrion; that stretch reads MRLISKVLVKTNCLEVGMRR.

Belongs to the AIM18/AIM46 family.

The protein localises to the mitochondrion. The chain is Altered inheritance of mitochondria protein 46, mitochondrial (AIM46) from Saccharomyces cerevisiae (strain YJM789) (Baker's yeast).